Consider the following 1222-residue polypeptide: Probable disease resistance protein At5g45510 (1222 aa).

Position 49–56 (49–56) interacts with ATP; sequence GEAGIGKT. Residues 122 to 183 are a coiled coil; sequence GERDEDEEEE…KLEAEKKLVD (62 aa). 4 stretches are compositionally biased toward basic and acidic residues: residues 171 to 205, 212 to 224, 263 to 279, and 286 to 322; these read AAEKLEAEKKLVDPAAKKAKDHGNKNPTDAAKEKT, GEDKAQTSSERKP, RRQETEEATKSGEHAEG, and SGEKKEDTDGEDEIRSADKEEPESQARVKTEEKHEKV. 2 disordered regions span residues 171 to 225 and 263 to 327; these read AAEK…RKPY and RRQE…PPTI. Threonine 293 is subject to Phosphothreonine. LRR repeat units lie at residues 654–676, 677–699, 702–724, 725–747, 785–806, 813–835, 836–856, 861–883, 884–906, 907–929, and 931–951; these read LLRVLIIRDCDLLKSIEELKALT, KLNTLEVSGASSLSKISEKFFES, ELRSLHLSGLKIESSPPSISGLK, ELHCLIIKDCPLLQDLPNIQELV, KLQHLDFSGSQIERLPIFQDSA, SLTRLLLRNCSKLRRLPSLKPLS, GLQILDLSGTTSLVEMLEVCF, ELKTLNLSGTNLSELATTIEDLS, SLNELLLRDCINLDAIPNIEKLE, NLEVIDVSGSAKLAKIEGSFEKM, and YLRVVDLSGTQVETPELPADT.

The protein belongs to the disease resistance NB-LRR family.

In terms of biological role, probable disease resistance protein. The chain is Probable disease resistance protein At5g45510 from Arabidopsis thaliana (Mouse-ear cress).